A 108-amino-acid polypeptide reads, in one-letter code: Beta-defensin 126 (108 aa).

A signal peptide spans 1–20; that stretch reads MKSLLFTLAVFMLLAQLVSG. Residues 21-63 are in vitro binds to LPS, mediates antimicrobial activity and inhibits LPS-mediated inflammation; it reads NWYVKKCLNDVGICKKKCKPGEMHIKNGWATCGKQRDCCVPAD. Disulfide bonds link Cys-27-Cys-58, Cys-34-Cys-52, and Cys-38-Cys-59.

This sequence belongs to the beta-defensin family. As to quaternary structure, homodimer or homooligomer; disulfide-linked. In terms of processing, O-glycosylated; glycans contain alpha(2,3)-linked sialic acids.

The protein localises to the secreted. In terms of biological role, highly glycosylated atypical beta-defensin involved in several aspects of sperm function. Facilitates sperm transport in the female reproductive tract and contributes to sperm protection against immunodetection; both functions are probably implicating the negative surface charge provided by its O-linked oligosaccharides in the sperm glycocalyx. Involved in binding of sperm to oviductal epithelial cells to form a sperm reservoir until ovulation. Release from the sperm surface during capacitation and ovaluation by an elevation of oviductal fluid pH is unmasking other surface components and allows sperm to penetrate the cumulus matrix and bind to the zona pellucida of the oocyte. In vitro has antimicrobial activity and may inhibit LPS-mediated inflammation. This chain is Beta-defensin 126 (DEFB126), found in Pan troglodytes (Chimpanzee).